The primary structure comprises 252 residues: Metalloprotease LoiP (252 aa).

An N-terminal signal peptide occupies residues 1-18 (MKIRALLVAMSVATVLTG). Cysteine 19 carries N-palmitoyl cysteine lipidation. Residue cysteine 19 is the site of S-diacylglycerol cysteine attachment. Cysteine 53 and cysteine 108 are joined by a disulfide. Histidine 130 is a binding site for Zn(2+). Glutamate 131 is a catalytic residue. Residues histidine 134 and glutamate 189 each contribute to the Zn(2+) site. A disordered region spans residues 224–252 (RQSSMFDDHPASAERAQHIRDRMSADGIK).

The protein belongs to the peptidase M48B family. As to quaternary structure, interacts with Era and BepA. Zn(2+) is required as a cofactor. In terms of processing, the intramolecular disulfide bond improves the stability and the activity of LoiP. It forms even in the absence of the oxido-reductase DsbA.

Its subcellular location is the cell outer membrane. Metalloprotease that cleaves substrates preferentially between Phe-Phe residues. Plays a role in response to some stress conditions. Seems to regulate the expression of speB. The polypeptide is Metalloprotease LoiP (loiP) (Escherichia coli (strain K12)).